A 392-amino-acid polypeptide reads, in one-letter code: Streptogrisin-D (392 aa).

The first 64 residues, 1–64 (MCVSRRRNSG…AGFTFQTANA (64 aa)), serve as a signal peptide directing secretion. Positions 65–204 (SDDVPAFGAK…NRTAGEFTPL (140 aa)) are excised as a propeptide. The cysteines at positions 218 and 238 are disulfide-linked. Residues His-237, Asp-266, and Ser-348 each act as charge relay system in the active site. Cys-342 and Cys-369 form a disulfide bridge.

It belongs to the peptidase S1 family. Homodimer.

Its function is as follows. Has a primary specificity for large aliphatic or aromatic amino acids. This is Streptogrisin-D (sprD) from Streptomyces griseus.